Here is a 245-residue protein sequence, read N- to C-terminus: Gem-associated protein 2 (245 aa).

The protein belongs to the gemin-2 family. In terms of assembly, component of the core survival motor neuron (SMN) complex composed of Smn, Gem2, Gem3, rig/Gem5 and one of 3 almost identical Gem4 paralogs encoded by Glos/Gem4a, Gem4b or Gem4c. Part of a minimal SMN complex composed of Smn and Gem2 only; this complex is active in UsnRNP assembly. The SMN complex associates with the entire set of spliceosomal snRNP Sm proteins, SmB, SmD1, SmD2, SmD3, SmE, SmF and SmG, and with the snRNP-specific proteins snRNP-U1-70K, U2A, snf/U1A and U5-116KD. In terms of tissue distribution, expressed in nurse cells and oocytes.

The protein resides in the cytoplasm. Its subcellular location is the U-body. Functionally, component of the survival motor neuron (SMN) complex that catalyzes the assembly of small nuclear ribonucleoproteins (snRNPs), the building blocks of the spliceosome, and thereby plays an important role in the splicing of cellular pre-mRNAs. Most spliceosomal snRNPs contain a common set of Sm proteins SNRPB, SNRPD1, SNRPD2, SNRPD3, SNRPE, SNRPF and SNRPG that assemble in a heptameric protein ring on the Sm site of the small nuclear RNA to form the core snRNP (Sm core). In the cytosol, the Sm proteins SNRPD1, SNRPD2, SNRPE, SNRPF and SNRPG (5Sm) are trapped in an inactive 6S pICln-Sm complex by the chaperone CLNS1A that controls the assembly of the core snRNP. To assemble core snRNPs, the SMN complex accepts the trapped 5Sm proteins from CLNS1A. Binding of snRNA inside 5Sm ultimately triggers eviction of the SMN complex, thereby allowing binding of SNRPD3 and SNRPB to complete assembly of the core snRNP. Within the SMN complex, GEMIN2 constrains the conformation of 5Sm, thereby promoting 5Sm binding to snRNA containing the snRNP code (a nonameric Sm site and a 3'-adjacent stem-loop), thus preventing progression of assembly until a cognate substrate is bound. Involved in adult motor function. This Drosophila melanogaster (Fruit fly) protein is Gem-associated protein 2.